Consider the following 396-residue polypeptide: Probable sugar efflux transporter (396 aa).

The next 12 membrane-spanning stretches (helical) occupy residues Val15 to Met35, Gly51 to Ala71, Leu84 to Leu104, Met109 to Ile129, Gln137 to Gly157, Val168 to Leu188, Pro209 to Tyr229, Asn245 to Phe265, Phe276 to Glu296, Thr297 to Leu317, Val333 to Gly353, and Ile365 to Leu385.

The protein belongs to the major facilitator superfamily. SotB (TC 2.A.1.2) family.

The protein resides in the cell inner membrane. Involved in the efflux of sugars. The physiological role may be the reduction of the intracellular concentration of toxic sugars or sugar metabolites. The sequence is that of Probable sugar efflux transporter from Haemophilus influenzae (strain PittGG).